Here is a 416-residue protein sequence, read N- to C-terminus: Tyrosine--tRNA ligase (416 aa).

Position 40 (Y40) interacts with L-tyrosine. Residues A45–H54 carry the 'HIGH' region motif. L-tyrosine is bound by residues Y177 and Q181. The 'KMSKS' region motif lies at K237–S241. Residue K240 coordinates ATP. Residues L351 to S416 form the S4 RNA-binding domain.

It belongs to the class-I aminoacyl-tRNA synthetase family. TyrS type 1 subfamily. As to quaternary structure, homodimer.

Its subcellular location is the cytoplasm. The enzyme catalyses tRNA(Tyr) + L-tyrosine + ATP = L-tyrosyl-tRNA(Tyr) + AMP + diphosphate + H(+). Its function is as follows. Catalyzes the attachment of tyrosine to tRNA(Tyr) in a two-step reaction: tyrosine is first activated by ATP to form Tyr-AMP and then transferred to the acceptor end of tRNA(Tyr). This chain is Tyrosine--tRNA ligase, found in Cereibacter sphaeroides (strain ATCC 17029 / ATH 2.4.9) (Rhodobacter sphaeroides).